The primary structure comprises 228 residues: ATP-dependent dethiobiotin synthetase BioD (228 aa).

Residue 14-19 coordinates ATP; that stretch reads DAGKTL. Position 18 (T18) interacts with Mg(2+). K39 is an active-site residue. Residues D56, 117–120, and 206–208 contribute to the ATP site; these read EGAG and PRL. D56 and E117 together coordinate Mg(2+).

Belongs to the dethiobiotin synthetase family. In terms of assembly, homodimer. Mg(2+) is required as a cofactor.

The protein localises to the cytoplasm. The catalysed reaction is (7R,8S)-7,8-diammoniononanoate + CO2 + ATP = (4R,5S)-dethiobiotin + ADP + phosphate + 3 H(+). It functions in the pathway cofactor biosynthesis; biotin biosynthesis; biotin from 7,8-diaminononanoate: step 1/2. Its function is as follows. Catalyzes a mechanistically unusual reaction, the ATP-dependent insertion of CO2 between the N7 and N8 nitrogen atoms of 7,8-diaminopelargonic acid (DAPA, also called 7,8-diammoniononanoate) to form a ureido ring. The protein is ATP-dependent dethiobiotin synthetase BioD of Cellvibrio japonicus (strain Ueda107) (Pseudomonas fluorescens subsp. cellulosa).